Reading from the N-terminus, the 257-residue chain is Global transcriptional regulator CodY (257 aa).

The tract at residues 1 to 155 is GAF domain; that stretch reads MSLLSKTREL…AATVIGMEIL (155 aa). Residues 203-222 constitute a DNA-binding region (H-T-H motif); sequence ASKVADRVGITRSVIVNALR.

It belongs to the CodY family.

It is found in the cytoplasm. Functionally, DNA-binding global transcriptional regulator which is involved in the adaptive response to starvation and acts by directly or indirectly controlling the expression of numerous genes in response to nutrient availability. During rapid exponential growth, CodY is highly active and represses genes whose products allow adaptation to nutrient depletion. The protein is Global transcriptional regulator CodY of Staphylococcus saprophyticus subsp. saprophyticus (strain ATCC 15305 / DSM 20229 / NCIMB 8711 / NCTC 7292 / S-41).